Here is a 705-residue protein sequence, read N- to C-terminus: uncharacterized protein (705 aa).

This is an uncharacterized protein from Acanthamoeba polyphaga (Amoeba).